Here is an 89-residue protein sequence, read N- to C-terminus: Small ribosomal subunit protein bS20 (89 aa).

Residues 1–29 form a disordered region; that stretch reads MTLANIKSAKKRAVQSEKRRQHNASQRSM.

Belongs to the bacterial ribosomal protein bS20 family.

Its function is as follows. Binds directly to 16S ribosomal RNA. This chain is Small ribosomal subunit protein bS20, found in Haemophilus influenzae (strain 86-028NP).